Reading from the N-terminus, the 159-residue chain is Nascent polypeptide-associated complex subunit beta (159 aa).

2 disordered regions span residues 1–39 and 124–159; these read MDME…GMDD and QSMQ…DKVE. Basic residues predominate over residues 23 to 32; the sequence is TPRRKVKNVH. An NAC-A/B domain is found at 36–101; the sequence is GMDDKKLQTS…GEDKELTELV (66 aa). The span at 136-153 shows a compositional bias: acidic residues; the sequence is KDDEEDDDDIPDLVEGEN.

The protein belongs to the NAC-beta family. As to quaternary structure, part of the nascent polypeptide-associated complex (NAC), consisting of EGD2 and EGD1. NAC associates with ribosomes via EGD1.

It localises to the cytoplasm. The protein localises to the nucleus. Component of the nascent polypeptide-associated complex (NAC), a dynamic component of the ribosomal exit tunnel, protecting the emerging polypeptides from interaction with other cytoplasmic proteins to ensure appropriate nascent protein targeting. The NAC complex also promotes mitochondrial protein import by enhancing productive ribosome interactions with the outer mitochondrial membrane and blocks the inappropriate interaction of ribosomes translating non-secretory nascent polypeptides with translocation sites in the membrane of the endoplasmic reticulum. EGD1 may act as a transcription factor that exert a negative effect on the expression of several genes that are transcribed by RNA polymerase II. The sequence is that of Nascent polypeptide-associated complex subunit beta (egd1) from Sclerotinia sclerotiorum (strain ATCC 18683 / 1980 / Ss-1) (White mold).